The following is a 117-amino-acid chain: Large ribosomal subunit protein uL18 (117 aa).

This sequence belongs to the universal ribosomal protein uL18 family. In terms of assembly, part of the 50S ribosomal subunit; part of the 5S rRNA/L5/L18/L25 subcomplex. Contacts the 5S and 23S rRNAs.

In terms of biological role, this is one of the proteins that bind and probably mediate the attachment of the 5S RNA into the large ribosomal subunit, where it forms part of the central protuberance. The polypeptide is Large ribosomal subunit protein uL18 (Mannheimia succiniciproducens (strain KCTC 0769BP / MBEL55E)).